The sequence spans 179 residues: Large ribosomal subunit protein uL5 (179 aa).

Belongs to the universal ribosomal protein uL5 family. Part of the 50S ribosomal subunit; part of the 5S rRNA/L5/L18/L25 subcomplex. Contacts the 5S rRNA and the P site tRNA. Forms a bridge to the 30S subunit in the 70S ribosome.

This is one of the proteins that bind and probably mediate the attachment of the 5S RNA into the large ribosomal subunit, where it forms part of the central protuberance. In the 70S ribosome it contacts protein S13 of the 30S subunit (bridge B1b), connecting the 2 subunits; this bridge is implicated in subunit movement. Contacts the P site tRNA; the 5S rRNA and some of its associated proteins might help stabilize positioning of ribosome-bound tRNAs. This chain is Large ribosomal subunit protein uL5, found in Shewanella loihica (strain ATCC BAA-1088 / PV-4).